The following is a 297-amino-acid chain: UBX domain-containing protein 1 (297 aa).

Residue Ala-2 is modified to N-acetylalanine. In terms of domain architecture, UBA spans 2 to 42 (AELTALESLIEMGFPKGRAEKALALTGNQGIEAAMDWLMEH). The interval 40 to 210 (MEHEDDPDVD…PSREPPTKRE (171 aa)) is disordered. The interaction with BRCA1 stretch occupies residues 43 to 297 (EDDPDVDEPL…VLIVAKKCPG (255 aa)). Basic and acidic residues-rich tracts occupy residues 86–122 (LTEEERQEQTKRMLELVAQKQREREEREEREALERER) and 137–177 (RLQE…ERAK). Residues 86–176 (LTEEERQEQT…KIERDKAERA (91 aa)) adopt a coiled-coil conformation. Positions 187–199 (PSPPATEPGPVPS) are enriched in pro residues. Ser-199 is modified (phosphoserine). Ser-200 is subject to Phosphoserine; by MAPK12. Residues Thr-207 and Thr-229 each carry the phosphothreonine modification. Residues 209–291 (REYDQCRIQV…GLVPSAVLIV (83 aa)) enclose the UBX domain. A Phosphoserine modification is found at Ser-270.

In terms of assembly, component of a complex required to couple retrotranslocation, ubiquitination and deglycosylation composed of NGLY1, SAKS1, AMFR, VCP and RAD23B. Interacts with HOMER2. Interacts directly with VCP. Interacts with BRCA1 and BARD1; interaction takes place when BRCA1 is not autoubiquitinated bur is strongly enhanced in the presence of autoubiquitinated BRCA1.

The protein resides in the cytoplasm. Ubiquitin-binding protein that interacts with the BRCA1-BARD1 heterodimer, and regulates its activity. Specifically binds 'Lys-6'-linked polyubiquitin chains. Interaction with autoubiquitinated BRCA1, leads to inhibit the E3 ubiquitin-protein ligase activity of the BRCA1-BARD1 heterodimer. Component of a complex required to couple deglycosylation and proteasome-mediated degradation of misfolded proteins in the endoplasmic reticulum that are retrotranslocated in the cytosol. The polypeptide is UBX domain-containing protein 1 (UBXN1) (Bos taurus (Bovine)).